The chain runs to 210 residues: Probable septum site-determining protein MinC (210 aa).

The protein belongs to the MinC family. Interacts with MinD and FtsZ.

Functionally, cell division inhibitor that blocks the formation of polar Z ring septums. Rapidly oscillates between the poles of the cell to destabilize FtsZ filaments that have formed before they mature into polar Z rings. Prevents FtsZ polymerization. The protein is Probable septum site-determining protein MinC of Thermotoga sp. (strain RQ2).